Here is a 692-residue protein sequence, read N- to C-terminus: Meiotic sister-chromatid recombination protein 6, mitochondrial (692 aa).

Residues 1-30 (MLSHNALRAFDCSKVIISRRCLTSSTSIYQ) constitute a mitochondrion transit peptide.

The protein resides in the mitochondrion. In terms of biological role, may be involved in the control of meiotic sister-chromatid recombination. This Saccharomyces cerevisiae (strain ATCC 204508 / S288c) (Baker's yeast) protein is Meiotic sister-chromatid recombination protein 6, mitochondrial (MSC6).